The chain runs to 564 residues: Formate--tetrahydrofolate ligase (564 aa).

An ATP-binding site is contributed by 65–72 (TPLGEGKT).

Belongs to the formate--tetrahydrofolate ligase family.

The enzyme catalyses (6S)-5,6,7,8-tetrahydrofolate + formate + ATP = (6R)-10-formyltetrahydrofolate + ADP + phosphate. It functions in the pathway one-carbon metabolism; tetrahydrofolate interconversion. The sequence is that of Formate--tetrahydrofolate ligase from Roseiflexus sp. (strain RS-1).